The following is a 307-amino-acid chain: 3-methyl-2-oxobutanoate hydroxymethyltransferase (307 aa).

Residues Asp61 and Asp100 each coordinate Mg(2+). 3-methyl-2-oxobutanoate is bound by residues 61–62 (DS), Asp100, and Lys130. Position 132 (Glu132) interacts with Mg(2+). Catalysis depends on Glu199, which acts as the Proton acceptor.

The protein belongs to the PanB family. Homodecamer; pentamer of dimers. It depends on Mg(2+) as a cofactor.

The protein localises to the cytoplasm. It catalyses the reaction 3-methyl-2-oxobutanoate + (6R)-5,10-methylene-5,6,7,8-tetrahydrofolate + H2O = 2-dehydropantoate + (6S)-5,6,7,8-tetrahydrofolate. The protein operates within cofactor biosynthesis; (R)-pantothenate biosynthesis; (R)-pantoate from 3-methyl-2-oxobutanoate: step 1/2. Catalyzes the reversible reaction in which hydroxymethyl group from 5,10-methylenetetrahydrofolate is transferred onto alpha-ketoisovalerate to form ketopantoate. This chain is 3-methyl-2-oxobutanoate hydroxymethyltransferase, found in Nitratidesulfovibrio vulgaris (strain ATCC 29579 / DSM 644 / CCUG 34227 / NCIMB 8303 / VKM B-1760 / Hildenborough) (Desulfovibrio vulgaris).